A 399-amino-acid chain; its full sequence is Lovastatin esterase (399 aa).

Serine 57 acts as the Nucleophile in catalysis. Residues lysine 60 and tyrosine 170 each act as proton acceptor in the active site.

It belongs to the class-A beta-lactamase family.

It carries out the reaction lovastatin + H2O = monacolin J + (S)-2-methylbutanoate + H(+). The enzyme catalyses pravastatin lactone + H2O = pravastatin diol lactone + (S)-2-methylbutanoate + H(+). It catalyses the reaction mevastatin + H2O = compactin diol lactone + (S)-2-methylbutanoate + H(+). Esterase that can hydrolyze the side chain of lovastatin to produce monacolin J. Is also able to hydrolyze the side chains of mevastatin and pravastatin, but not simvastatin. The polypeptide is Lovastatin esterase (Penicillium rubens (strain ATCC 28089 / DSM 1075 / NRRL 1951 / Wisconsin 54-1255) (Penicillium chrysogenum)).